The chain runs to 775 residues: MASLIYRQLLTNSYSVDLHDEIEQIGSEKTQNVTVNPGPFAQTRYAPVNWGHGEINDSTTVELILDGPYQPTTFTPPTDYWILINSNTNGVVYESTNNSDFWTAVVAVEPHVNPVDRQYLIFGENKQFNVSNDSDKWKFLEMFRSSSQNEFYNRRTLTSDTRLVGILKYGGRVWTFHGETPRATTDSSNTANLNNISITIHSEFYIIPRSQESKCNEYINNGLPPIQNTRNVVPLSLSSRSIQYKRAQVNEDITISKTSLWKEMQYNGDIIIRFKFGNSIIKPGGLGYKWSEISFKAANYQYNYLRDGEQVTAHTTCSVNGINNFSYNGGYLPTDFSVLRYEVIKENSYVYVDYWDDSKAFRNMVYVRSLAANLNSVKCTGGSYDFSIPVGAWPVMNGGAVSLHFAGVTLSTQFTDFVSLNSLRFRFSLTVDEPSFSILRTRTVNLYGLPAANPNNGNEYYEISGRFSLISLVPTNDDYQTPIMNSVTVRQDLERQLTDLREEFNSLSQEIAMSQLIDLALLPLDMFSMFSGIKSTIHLTKSMATSVMKKFRKSKLATSVSEMTNSLSDAASSASRSVSVRSNISAISNWTNVSDDVSNVTDSVNDVSTQTSTISKKLRLKEMITQTEGMSFDDISAAVLKTKIDKSTQIRKNTLPDIVEEASEKFIPKRSYRILKDDEVMEINTEGKFFAYKIDTLNEVPFDVNKFTELVTNTPVISAIIDFKTLKNLNDNYGITRTEAFNLIKSNPNVLRNFINQNHPIIRNRIEQLILQCRL.

The segment at 65-223 (LDGPYQPTTF…KCNEYINNGL (159 aa)) is spike head. A spike body and stalk (antigen domain) region spans residues 247 to 478 (AQVNEDITIS…LISLVPTNDD (232 aa)). The short motif at 307–309 (DGE) is the DGE motif; interaction with ITGA2/ITGB1 heterodimer element. Cysteine 317 and cysteine 379 form a disulfide bridge. A hydrophobic; possible role in virus entry into host cell region spans residues 388–408 (IPVGAWPVMNGGAVSLHFAGV). Positions 447–449 (YGL) match the YGL motif; interaction with ITGA4 motif. The stretch at 483–510 (IMNSVTVRQDLERQLTDLREEFNSLSQE) forms a coiled coil. Positions 509–775 (QEIAMSQLID…IEQLILQCRL (267 aa)) are spike foot. A KID motif; interaction with HSPA8 motif is present at residues 643-645 (KID).

It belongs to the rotavirus VP4 family. Homotrimer. VP4 adopts a dimeric appearance above the capsid surface, while forming a trimeric base anchored inside the capsid layer. Only hints of the third molecule are observed above the capsid surface. It probably performs a series of molecular rearrangements during viral entry. Prior to trypsin cleavage, it is flexible. The priming trypsin cleavage triggers its rearrangement into rigid spikes with approximate two-fold symmetry of their protruding parts. After an unknown second triggering event, cleaved VP4 may undergo another rearrangement, in which two VP5* subunits fold back on themselves and join a third subunit to form a tightly associated trimer, shaped like a folded umbrella. Interacts with VP6. Interacts with VP7. As to quaternary structure, homotrimer. The trimer is coiled-coil stabilized by its C-terminus, however, its N-terminus, known as antigen domain or 'body', seems to be flexible allowing it to self-associate either as a dimer or a trimer. In terms of processing, proteolytic cleavage by trypsin results in activation of VP4 functions and greatly increases infectivity. The penetration into the host cell is dependent on trypsin treatment of VP4. It produces two peptides, VP5* and VP8* that remain associated with the virion. Cleavage of VP4 by trypsin probably occurs in vivo in the lumen of the intestine prior to infection of enterocytes. Trypsin seems to be incorporated into the three-layered viral particles but remains inactive as long as the viral outer capsid is intact and would only be activated upon the solubilization of the latter.

The protein resides in the virion. The protein localises to the host rough endoplasmic reticulum. It localises to the host cell membrane. Its subcellular location is the host cytoplasm. It is found in the host cytoskeleton. The protein resides in the host endoplasmic reticulum-Golgi intermediate compartment. Spike-forming protein that mediates virion attachment to the host epithelial cell receptors and plays a major role in cell penetration, determination of host range restriction and virulence. Rotavirus attachment and entry into the host cell probably involves multiple sequential contacts between the outer capsid proteins VP4 and VP7, and the cell receptors. It is subsequently lost, together with VP7, following virus entry into the host cell. Following entry into the host cell, low intracellular or intravesicular Ca(2+) concentration probably causes the calcium-stabilized VP7 trimers to dissociate from the virion. This step is probably necessary for the membrane-disrupting entry step and the release of VP4, which is locked onto the virion by VP7. During the virus exit from the host cell, VP4 seems to be required to target the newly formed virions to the host cell lipid rafts. Functionally, forms the spike 'foot' and 'body' and acts as a membrane permeabilization protein that mediates release of viral particles from endosomal compartments into the cytoplasm. During entry, the part of VP5* that protrudes from the virus folds back on itself and reorganizes from a local dimer to a trimer. This reorganization may be linked to membrane penetration by exposing VP5* hydrophobic region. In integrin-dependent strains, VP5* targets the integrin heterodimer ITGA2/ITGB1 for cell attachment. Its function is as follows. Forms the head of the spikes and mediates the recognition of specific host cell surface glycans. It is the viral hemagglutinin and an important target of neutralizing antibodies. In sialic acid-dependent strains, VP8* binds to host cell sialic acid, most probably a ganglioside, providing the initial contact. In some other strains, VP8* mediates the attachment to histo-blood group antigens (HBGAs) for viral entry. This Homo sapiens (Human) protein is Outer capsid protein VP4.